A 243-amino-acid chain; its full sequence is 1-(5-phosphoribosyl)-5-[(5-phosphoribosylamino)methylideneamino] imidazole-4-carboxamide isomerase (243 aa).

Aspartate 10 serves as the catalytic Proton acceptor. Catalysis depends on aspartate 128, which acts as the Proton donor.

Belongs to the HisA/HisF family.

It is found in the cytoplasm. It catalyses the reaction 1-(5-phospho-beta-D-ribosyl)-5-[(5-phospho-beta-D-ribosylamino)methylideneamino]imidazole-4-carboxamide = 5-[(5-phospho-1-deoxy-D-ribulos-1-ylimino)methylamino]-1-(5-phospho-beta-D-ribosyl)imidazole-4-carboxamide. The protein operates within amino-acid biosynthesis; L-histidine biosynthesis; L-histidine from 5-phospho-alpha-D-ribose 1-diphosphate: step 4/9. In Helicobacter hepaticus (strain ATCC 51449 / 3B1), this protein is 1-(5-phosphoribosyl)-5-[(5-phosphoribosylamino)methylideneamino] imidazole-4-carboxamide isomerase.